We begin with the raw amino-acid sequence, 247 residues long: tRNA uridine(34) hydroxylase (247 aa).

The region spanning 123–217 (ITKQDVIVDT…YLEDTQNKNN (95 aa)) is the Rhodanese domain. Residue Cys-177 is the Cysteine persulfide intermediate of the active site.

This sequence belongs to the TrhO family.

It catalyses the reaction uridine(34) in tRNA + AH2 + O2 = 5-hydroxyuridine(34) in tRNA + A + H2O. Catalyzes oxygen-dependent 5-hydroxyuridine (ho5U) modification at position 34 in tRNAs. The polypeptide is tRNA uridine(34) hydroxylase (Rickettsia bellii (strain RML369-C)).